A 335-amino-acid polypeptide reads, in one-letter code: 2-acylglycerol O-acyltransferase 1 (335 aa).

Helical transmembrane passes span 24–44 and 47–67; these read WVFSFLLLAQCCIGIFICLVL and VWLLLALYVLWLYLDWETPQA. N-linked (GlcNAc...) asparagine glycosylation is found at Asn125 and Asn180.

The protein belongs to the diacylglycerol acyltransferase family.

It localises to the endoplasmic reticulum membrane. It catalyses the reaction a 2-acylglycerol + an acyl-CoA = a 1,2-diacylglycerol + CoA. It carries out the reaction a 2-acylglycerol + an acyl-CoA = a 1,2-diacyl-sn-glycerol + CoA. The enzyme catalyses a 2-acylglycerol + an acyl-CoA = a 2,3-diacyl-sn-glycerol + CoA. The catalysed reaction is a 1-acylglycerol + an acyl-CoA = a 1,2-diacylglycerol + CoA. It catalyses the reaction a 1-acylglycerol + an acyl-CoA = a 1,3-diacylglycerol + CoA. It carries out the reaction a 1-acyl-sn-glycerol + an acyl-CoA = a 1,3-diacyl-sn-glycerol + CoA. The enzyme catalyses a 3-acyl-sn-glycerol + an acyl-CoA = a 1,3-diacyl-sn-glycerol + CoA. It functions in the pathway glycerolipid metabolism; triacylglycerol biosynthesis. Involved in glycerolipid synthesis and lipid metabolism. Catalyzes the formation of diacylglycerol, the precursor of triacylglycerol, by transferring the acyl chain of a fatty acyl-CoA to a monoacylglycerol, mainly at the sn-1 or sn-3 positions. It uses both sn-2-monoacylglycerol (2-acylglycerol) and sn-1-monoacylglycerol (1-acyl-sn-glycerol) equally well as substrates, and uses sn-3-monoacylglycerol (3-acyl-sn-glycerol) with lower efficiency. The protein is 2-acylglycerol O-acyltransferase 1 (mogat1) of Xenopus laevis (African clawed frog).